The following is a 127-amino-acid chain: Protein ApaG (127 aa).

One can recognise an ApaG domain in the interval 3–127; the sequence is EGKKYQINIS…FTLAMPRVLH (125 aa).

This chain is Protein ApaG, found in Thiobacillus denitrificans (strain ATCC 25259 / T1).